The following is a 466-amino-acid chain: UPF0652 protein C16A11.03c (466 aa).

This sequence belongs to the UPF0652 family.

It is found in the cytoplasm. The protein localises to the nucleus. The protein is UPF0652 protein C16A11.03c of Schizosaccharomyces pombe (strain 972 / ATCC 24843) (Fission yeast).